The chain runs to 375 residues: Queuine tRNA-ribosyltransferase (375 aa).

Catalysis depends on Asp93, which acts as the Proton acceptor. Residues 93–97, Asp147, Gln194, and Gly221 each bind substrate; that span reads DSGGY. Positions 252 to 258 are RNA binding; that stretch reads GVGKPDD. Residue Asp271 is the Nucleophile of the active site. The interval 276-280 is RNA binding; important for wobble base 34 recognition; that stretch reads TRSGR. 4 residues coordinate Zn(2+): Cys309, Cys311, Cys314, and His340.

This sequence belongs to the queuine tRNA-ribosyltransferase family. Homodimer. Within each dimer, one monomer is responsible for RNA recognition and catalysis, while the other monomer binds to the replacement base PreQ1. Requires Zn(2+) as cofactor.

The catalysed reaction is 7-aminomethyl-7-carbaguanine + guanosine(34) in tRNA = 7-aminomethyl-7-carbaguanosine(34) in tRNA + guanine. It functions in the pathway tRNA modification; tRNA-queuosine biosynthesis. In terms of biological role, catalyzes the base-exchange of a guanine (G) residue with the queuine precursor 7-aminomethyl-7-deazaguanine (PreQ1) at position 34 (anticodon wobble position) in tRNAs with GU(N) anticodons (tRNA-Asp, -Asn, -His and -Tyr). Catalysis occurs through a double-displacement mechanism. The nucleophile active site attacks the C1' of nucleotide 34 to detach the guanine base from the RNA, forming a covalent enzyme-RNA intermediate. The proton acceptor active site deprotonates the incoming PreQ1, allowing a nucleophilic attack on the C1' of the ribose to form the product. After dissociation, two additional enzymatic reactions on the tRNA convert PreQ1 to queuine (Q), resulting in the hypermodified nucleoside queuosine (7-(((4,5-cis-dihydroxy-2-cyclopenten-1-yl)amino)methyl)-7-deazaguanosine). In Sphingopyxis alaskensis (strain DSM 13593 / LMG 18877 / RB2256) (Sphingomonas alaskensis), this protein is Queuine tRNA-ribosyltransferase.